The sequence spans 832 residues: Protein P (832 aa).

The interval 1 to 177 is terminal protein domain (TP); the sequence is MPLSYQHFRK…FCGSPYSWEQ (177 aa). Positions 178–335 are spacer; it reads ELQHGAESFH…YCLSHIVNLL (158 aa). Over residues 186 to 206 the composition is skewed to polar residues; it reads FHQQSSGILSRPSVGSSLQSK. Disordered stretches follow at residues 186 to 255 and 280 to 305; these read FHQQ…GHNA and TSENHSSSGHAVELHNLPPNSARSQS. The span at 210–220 shows a compositional bias: low complexity; that stretch reads SRLGLQSQQGH. Residues 336–679 are polymerase/reverse transcriptase domain (RT); the sequence is EDWGPCAEHG…YLNLYPVARQ (344 aa). The Reverse transcriptase domain occupies 346 to 589; sequence EHHIRIPRTP…YSLNFMGYVI (244 aa). 3 residues coordinate Mg(2+): Asp418, Asp540, and Asp541.

This sequence belongs to the hepadnaviridae P protein family.

The catalysed reaction is DNA(n) + a 2'-deoxyribonucleoside 5'-triphosphate = DNA(n+1) + diphosphate. It carries out the reaction Endonucleolytic cleavage to 5'-phosphomonoester.. Activated by host HSP70 and HSP40 in vitro to be able to bind the epsilon loop of the pgRNA. Because deletion of the RNase H region renders the protein partly chaperone-independent, the chaperones may be needed indirectly to relieve occlusion of the RNA-binding site by this domain. Inhibited by several reverse-transcriptase inhibitors: Lamivudine, Adefovir and Entecavir. Its function is as follows. Multifunctional enzyme that converts the viral RNA genome into dsDNA in viral cytoplasmic capsids. This enzyme displays a DNA polymerase activity that can copy either DNA or RNA templates, and a ribonuclease H (RNase H) activity that cleaves the RNA strand of RNA-DNA heteroduplexes in a partially processive 3'- to 5'-endonucleasic mode. Neo-synthesized pregenomic RNA (pgRNA) are encapsidated together with the P protein, and reverse-transcribed inside the nucleocapsid. Initiation of reverse-transcription occurs first by binding the epsilon loop on the pgRNA genome, and is initiated by protein priming, thereby the 5'-end of (-)DNA is covalently linked to P protein. Partial (+)DNA is synthesized from the (-)DNA template and generates the relaxed circular DNA (RC-DNA) genome. After budding and infection, the RC-DNA migrates in the nucleus, and is converted into a plasmid-like covalently closed circular DNA (cccDNA). The activity of P protein does not seem to be necessary for cccDNA generation, and is presumably released from (+)DNA by host nuclear DNA repair machinery. The protein is Protein P of Hepatitis B virus genotype D subtype ayw (isolate Australia/AustKW/1991) (HBV-D).